Consider the following 121-residue polypeptide: Large ribosomal subunit protein bL19 (121 aa).

The protein belongs to the bacterial ribosomal protein bL19 family.

In terms of biological role, this protein is located at the 30S-50S ribosomal subunit interface and may play a role in the structure and function of the aminoacyl-tRNA binding site. The polypeptide is Large ribosomal subunit protein bL19 (Mesomycoplasma hyopneumoniae (strain 232) (Mycoplasma hyopneumoniae)).